A 357-amino-acid chain; its full sequence is Ribosomal RNA large subunit methyltransferase F (357 aa).

A compositionally biased stretch (polar residues) spans 1–15 (MPKPPRSTQILSCNA). The disordered stretch occupies residues 1–33 (MPKPPRSTQILSCNAPNGKPKTQHPSARAKVKR).

The protein belongs to the methyltransferase superfamily. METTL16/RlmF family.

It localises to the cytoplasm. The enzyme catalyses adenosine(1618) in 23S rRNA + S-adenosyl-L-methionine = N(6)-methyladenosine(1618) in 23S rRNA + S-adenosyl-L-homocysteine + H(+). Specifically methylates the adenine in position 1618 of 23S rRNA. The polypeptide is Ribosomal RNA large subunit methyltransferase F (Shewanella putrefaciens (strain CN-32 / ATCC BAA-453)).